Here is a 938-residue protein sequence, read N- to C-terminus: Isoleucine--tRNA ligase (938 aa).

Positions 58 to 68 (PYANGNIHIGH) match the 'HIGH' region motif. Glutamate 563 is an L-isoleucyl-5'-AMP binding site. The 'KMSKS' region motif lies at 604 to 608 (KMSKS). An ATP-binding site is contributed by lysine 607. Zn(2+)-binding residues include cysteine 903, cysteine 906, cysteine 921, and cysteine 924.

The protein belongs to the class-I aminoacyl-tRNA synthetase family. IleS type 1 subfamily. As to quaternary structure, monomer. Requires Zn(2+) as cofactor.

The protein resides in the cytoplasm. It carries out the reaction tRNA(Ile) + L-isoleucine + ATP = L-isoleucyl-tRNA(Ile) + AMP + diphosphate. Its function is as follows. Catalyzes the attachment of isoleucine to tRNA(Ile). As IleRS can inadvertently accommodate and process structurally similar amino acids such as valine, to avoid such errors it has two additional distinct tRNA(Ile)-dependent editing activities. One activity is designated as 'pretransfer' editing and involves the hydrolysis of activated Val-AMP. The other activity is designated 'posttransfer' editing and involves deacylation of mischarged Val-tRNA(Ile). The protein is Isoleucine--tRNA ligase of Buchnera aphidicola subsp. Schizaphis graminum (strain Sg).